Reading from the N-terminus, the 306-residue chain is Ribonuclease Z (306 aa).

Positions 63, 65, 67, 68, 142, 213, and 271 each coordinate Zn(2+). The active-site Proton acceptor is the Asp-67.

Belongs to the RNase Z family. In terms of assembly, homodimer. It depends on Zn(2+) as a cofactor.

The enzyme catalyses Endonucleolytic cleavage of RNA, removing extra 3' nucleotides from tRNA precursor, generating 3' termini of tRNAs. A 3'-hydroxy group is left at the tRNA terminus and a 5'-phosphoryl group is left at the trailer molecule.. Functionally, zinc phosphodiesterase, which displays some tRNA 3'-processing endonuclease activity. Probably involved in tRNA maturation, by removing a 3'-trailer from precursor tRNA. This is Ribonuclease Z from Oceanobacillus iheyensis (strain DSM 14371 / CIP 107618 / JCM 11309 / KCTC 3954 / HTE831).